The primary structure comprises 812 residues: Valine--tRNA ligase (812 aa).

A 'HIGH' region motif is present at residues 46–56; it reads PTVSGQLHIGH. The 'KMSKS' region motif lies at 536 to 540; sequence KMSKS. Lys-539 serves as a coordination point for ATP.

The protein belongs to the class-I aminoacyl-tRNA synthetase family. ValS type 2 subfamily. As to quaternary structure, monomer.

It is found in the cytoplasm. The enzyme catalyses tRNA(Val) + L-valine + ATP = L-valyl-tRNA(Val) + AMP + diphosphate. In terms of biological role, catalyzes the attachment of valine to tRNA(Val). As ValRS can inadvertently accommodate and process structurally similar amino acids such as threonine, to avoid such errors, it has a 'posttransfer' editing activity that hydrolyzes mischarged Thr-tRNA(Val) in a tRNA-dependent manner. This is Valine--tRNA ligase from Rickettsia bellii (strain OSU 85-389).